A 255-amino-acid polypeptide reads, in one-letter code: GTP cyclohydrolase III 1 (255 aa).

Belongs to the archaeal-type GTP cyclohydrolase family.

The catalysed reaction is GTP + 3 H2O = 2-amino-5-formylamino-6-(5-phospho-D-ribosylamino)pyrimidin-4(3H)-one + 2 phosphate + 2 H(+). In terms of biological role, catalyzes the formation of 2-amino-5-formylamino-6-ribofuranosylamino-4(3H)-pyrimidinone ribonucleotide monophosphate and inorganic phosphate from GTP. Also has an independent pyrophosphate phosphohydrolase activity. In Halobacterium salinarum (strain ATCC 700922 / JCM 11081 / NRC-1) (Halobacterium halobium), this protein is GTP cyclohydrolase III 1 (gch31).